Consider the following 584-residue polypeptide: Vesicular glutamate transporter 2.1 (584 aa).

Residues 1–70 (METPREPAGF…CTCFGLPRRY (70 aa)) are Cytoplasmic-facing. The chain crosses the membrane as a helical span at residues 71 to 91 (IIAIMSGLGFCISFGIRCNLG). The Vesicular segment spans residues 92 to 124 (VAIVSMVNNSTIHLNGKIIIKEKAKFNWDPETV). Residues Asn-99 and Asn-100 are each glycosylated (N-linked (GlcNAc...) asparagine). The helical transmembrane segment at 125 to 145 (GLIHGSFFWGYIVTQIPGGYI) threads the bilayer. Residues 146–148 (SSR) lie on the Cytoplasmic side of the membrane. Residues 149 to 169 (LAANRVFGAAILLTSTLNMFI) traverse the membrane as a helical segment. The Vesicular portion of the chain corresponds to 170–177 (PSAARGHY). A helical transmembrane segment spans residues 178–198 (GCVIFVRILQGLVEGVTYPAC). Residues 199 to 216 (HGIWSKWAPPLERSRLAT) lie on the Cytoplasmic side of the membrane. Residues 217-237 (TSFCGSYAGAVIAMPLAGILV) traverse the membrane as a helical segment. The Vesicular portion of the chain corresponds to 238–244 (QYTGWSS). The chain crosses the membrane as a helical span at residues 245-265 (VFYVYGCFGIFWYMFWILVSY). Topologically, residues 266-310 (ESPAEHPTITAEERCYIEESIGESAKLLGPADKFKTPWRKFFTSM) are cytoplasmic. The helical transmembrane segment at 311–331 (PVYAIIVANFCRSWTFYLLLI) threads the bilayer. The Vesicular portion of the chain corresponds to 332 to 349 (SQPAYFEEVFGFEISKVG). Residues 350-370 (MLSALPHLVMTIIVPIGGQLA) traverse the membrane as a helical segment. Topologically, residues 371–386 (DHLRSKNILSTTTVRK) are cytoplasmic. A helical transmembrane segment spans residues 387-407 (IMNCGGFGMEATLLLIVGYSH). Topologically, residues 408-409 (SK) are vesicular. Residues 410–430 (GVAISFLVLAVGFSGFAISGF) form a helical membrane-spanning segment. The Cytoplasmic segment spans residues 431–445 (NVNHLDIAPRYASIL). Residues 446–466 (MGISNGVGTLSGMVCPLIVGA) traverse the membrane as a helical segment. Residues 467-477 (MTKHKTREEWQ) lie on the Vesicular side of the membrane. A helical membrane pass occupies residues 478 to 498 (YVFLIASLVHYGGVIFYGIFA). The Cytoplasmic segment spans residues 499–584 (SGEKQPWADP…YGYRQGGNYS (86 aa)).

The protein belongs to the major facilitator superfamily. Sodium/anion cotransporter family. VGLUT subfamily. In terms of tissue distribution, expressed in spinal cord and retinal ganglion cells.

It is found in the cytoplasmic vesicle. The protein resides in the secretory vesicle. The protein localises to the synaptic vesicle membrane. Its subcellular location is the membrane. It localises to the synapse. It is found in the synaptosome. The protein resides in the cell membrane. It carries out the reaction L-glutamate(out) = L-glutamate(in). The catalysed reaction is 3 Na(+)(out) + phosphate(out) = 3 Na(+)(in) + phosphate(in). It catalyses the reaction phosphate(in) = phosphate(out). The enzyme catalyses K(+)(in) + H(+)(out) = K(+)(out) + H(+)(in). It carries out the reaction chloride(in) = chloride(out). Its activity is regulated as follows. Chloride channel activity is allosterically activated by lumenal H(+) and Cl(-) leading to synaptic vesicles acidification. The L-glutamate transport activity is allosterically activated by lumenal H(+) and Cl(-). The allosteric requirement for H(+) efficiently prevents non-vesicular efflux across the plasma membrane. The L-glutamate uniporter activity exhibits a biphasic dependence on chloride concentration. In terms of biological role, multifunctional transporter that transports L-glutamate as well as multiple ions such as chloride, proton, potassium, sodium and phosphate. At the synaptic vesicle membrane, mainly functions as a uniporter which transports preferentially L-glutamate but also, phosphate from the cytoplasm into synaptic vesicles at presynaptic nerve terminals of excitatory neural cells. The L-glutamate or phosphate uniporter activity is electrogenic and is driven by the proton electrochemical gradient, mainly by the electrical gradient established by the vacuolar H(+)-ATPase across the synaptic vesicle membrane. In addition, functions as a chloride channel that allows a chloride permeation through the synaptic vesicle membrane therefore affects the proton electrochemical gradient and promotes synaptic vesicles acidification. Moreover, functions as a vesicular K(+)/H(+) antiport allowing to maintain the electrical gradient and to decrease chemical gradient and therefore sustain vesicular L-glutamate uptake. The vesicular H(+)/H(+) antiport activity is electroneutral. At the plasma membrane, following exocytosis, functions as a symporter of Na(+) and phosphate from the extracellular space to the cytoplasm allowing synaptic phosphate homeostasis regulation. The symporter activity is driven by an inside negative membrane potential and is electrogenic. Also involved in the regulation of retinal hyaloid vessel regression during postnatal development. May also play a role in the endocrine L-glutamatergic system of other tissues such as pineal gland and pancreas. Required for glutamate release by retinotectal synapses and visual acuity. This is Vesicular glutamate transporter 2.1 (slc17a6b) from Danio rerio (Zebrafish).